Reading from the N-terminus, the 352-residue chain is Type II restriction enzyme HaeII (352 aa).

The enzyme catalyses Endonucleolytic cleavage of DNA to give specific double-stranded fragments with terminal 5'-phosphates.. In terms of biological role, a P subtype restriction enzyme that recognizes the double-stranded sequence 5'-RGCGCY-3' and cleaves after C-5. The sequence is that of Type II restriction enzyme HaeII (haeIIR) from Haemophilus aegyptius.